Consider the following 245-residue polypeptide: 2,3-bisphosphoglycerate-dependent phosphoglycerate mutase (245 aa).

Substrate contacts are provided by residues arginine 8–asparagine 15, threonine 21–glycine 22, arginine 60, glutamate 87–tyrosine 90, lysine 98, arginine 114–arginine 115, and glycine 183–asparagine 184. The active-site Tele-phosphohistidine intermediate is the histidine 9. Glutamate 87 functions as the Proton donor/acceptor in the catalytic mechanism.

The protein belongs to the phosphoglycerate mutase family. BPG-dependent PGAM subfamily.

It carries out the reaction (2R)-2-phosphoglycerate = (2R)-3-phosphoglycerate. The protein operates within carbohydrate degradation; glycolysis; pyruvate from D-glyceraldehyde 3-phosphate: step 3/5. In terms of biological role, catalyzes the interconversion of 2-phosphoglycerate and 3-phosphoglycerate. In Bacillus cytotoxicus (strain DSM 22905 / CIP 110041 / 391-98 / NVH 391-98), this protein is 2,3-bisphosphoglycerate-dependent phosphoglycerate mutase.